Here is a 127-residue protein sequence, read N- to C-terminus: Lymphocyte antigen 6D (127 aa).

The N-terminal stretch at 1 to 20 (MKTALLVLLVLAVATSPAWA) is a signal peptide. One can recognise a UPAR/Ly6 domain in the interval 21-108 (LRCHVCTNSA…AAPGHALLSS (88 aa)). Cystine bridges form between Cys23–Cys45, Cys26–Cys32, Cys38–Cys63, Cys67–Cys86, and Cys87–Cys92. A lipid anchor (GPI-anchor amidated serine) is attached at Ser98. The propeptide at 99 to 127 (AAPGHALLSSVTLGLATSLSLLTVMALCL) is removed in mature form.

In terms of tissue distribution, lymphoid cells lacking Ly6d, called ALP (all-lymphoid progenitor), retain full lymphoid potential and early thymic seeding activity, whereas cells containing Ly6d, called BLP (B-cell-biased lymphoid progenitor), up-regulate the B-cell specifying factors Ebf1 and Pax5 and behave essentially as B-cell progenitors (at protein level). Thymocytes and B-cells.

The protein localises to the cell membrane. Its function is as follows. May act as a specification marker at earliest stage specification of lymphocytes between B- and T-cell development. Marks the earliest stage of B-cell specification. The protein is Lymphocyte antigen 6D (Ly6d) of Mus musculus (Mouse).